The chain runs to 288 residues: MALPDFSMRQLLEAGCHFGHQTHRWNPKMKDFIFGERSNIHIIDLSQTVPLLHQALVKVRETAAKGGRVLFVGTKRQAQDPLAQAAGRCAQYYMNQRWLGGTLTNWRTISNSIARLRELEGMFENEGGMAGLTKKEQLMLTREREKLDRSLGGIKDMGGTPDLMFVIDTNKEGIAIQEAKKLGIPVIAVVDTNCDPDLVDFPIPGNDDASRAISLYCDLIADAVLDGMGDSQLAMGMDLGEAEAPVETLVEAEAEVVAEAAPAAEEAPAAEAEAAATDTSSESDKTEA.

Low complexity predominate over residues 259–276 (EAAPAAEEAPAAEAEAAA). The disordered stretch occupies residues 259-288 (EAAPAAEEAPAAEAEAAATDTSSESDKTEA).

This sequence belongs to the universal ribosomal protein uS2 family.

The protein is Small ribosomal subunit protein uS2 of Maricaulis maris (strain MCS10) (Caulobacter maris).